A 240-amino-acid chain; its full sequence is Leucyl/phenylalanyl-tRNA--protein transferase (240 aa).

Belongs to the L/F-transferase family.

The protein localises to the cytoplasm. The enzyme catalyses N-terminal L-lysyl-[protein] + L-leucyl-tRNA(Leu) = N-terminal L-leucyl-L-lysyl-[protein] + tRNA(Leu) + H(+). It carries out the reaction N-terminal L-arginyl-[protein] + L-leucyl-tRNA(Leu) = N-terminal L-leucyl-L-arginyl-[protein] + tRNA(Leu) + H(+). The catalysed reaction is L-phenylalanyl-tRNA(Phe) + an N-terminal L-alpha-aminoacyl-[protein] = an N-terminal L-phenylalanyl-L-alpha-aminoacyl-[protein] + tRNA(Phe). Functionally, functions in the N-end rule pathway of protein degradation where it conjugates Leu, Phe and, less efficiently, Met from aminoacyl-tRNAs to the N-termini of proteins containing an N-terminal arginine or lysine. This Maridesulfovibrio salexigens (strain ATCC 14822 / DSM 2638 / NCIMB 8403 / VKM B-1763) (Desulfovibrio salexigens) protein is Leucyl/phenylalanyl-tRNA--protein transferase.